Consider the following 677-residue polypeptide: DNA ligase (677 aa).

NAD(+)-binding positions include D35 to D39, S84 to L85, and E115. Residue K117 is the N6-AMP-lysine intermediate of the active site. Residues R138, E177, K296, and K320 each coordinate NAD(+). Zn(2+) contacts are provided by C414, C417, C432, and C437. A BRCT domain is found at N599 to E677.

It belongs to the NAD-dependent DNA ligase family. LigA subfamily. It depends on Mg(2+) as a cofactor. Mn(2+) is required as a cofactor.

It catalyses the reaction NAD(+) + (deoxyribonucleotide)n-3'-hydroxyl + 5'-phospho-(deoxyribonucleotide)m = (deoxyribonucleotide)n+m + AMP + beta-nicotinamide D-nucleotide.. Functionally, DNA ligase that catalyzes the formation of phosphodiester linkages between 5'-phosphoryl and 3'-hydroxyl groups in double-stranded DNA using NAD as a coenzyme and as the energy source for the reaction. It is essential for DNA replication and repair of damaged DNA. This is DNA ligase from Nostoc sp. (strain PCC 7120 / SAG 25.82 / UTEX 2576).